The primary structure comprises 251 residues: MEKIKSAGPSSVPRHVAIIMDGNNRWARKRLLPGVAGHKAGVDAVRAVIEVCAEAKVEVLTLFAFSSENWQRPAEEVGALMELFFTALRRETKRLNENDISLRIIGDRSRFHPELQAAMREAEVRTSGNSRFVLQIAANYGGQWDIAQAAQRLAREVQAGHLQPEDITPQLLQTCLATGDLPLPDLCIRTGGEHRISNFLLWQLAYAELYFSDLFWPDFKHDAMRAALADFASRQRRFGKTSEQVEAGARA.

The active site involves D21. D21 contributes to the Mg(2+) binding site. Substrate-binding positions include 22–25 (GNNR), W26, H38, and 66–68 (SSE). Residue N69 is the Proton acceptor of the active site. Substrate-binding positions include W70, R72, R189, and 195-197 (RIS). Position 208 (E208) interacts with Mg(2+).

The protein belongs to the UPP synthase family. As to quaternary structure, homodimer. The cofactor is Mg(2+).

The catalysed reaction is 8 isopentenyl diphosphate + (2E,6E)-farnesyl diphosphate = di-trans,octa-cis-undecaprenyl diphosphate + 8 diphosphate. Functionally, catalyzes the sequential condensation of isopentenyl diphosphate (IPP) with (2E,6E)-farnesyl diphosphate (E,E-FPP) to yield (2Z,6Z,10Z,14Z,18Z,22Z,26Z,30Z,34E,38E)-undecaprenyl diphosphate (di-trans,octa-cis-UPP). UPP is the precursor of glycosyl carrier lipid in the biosynthesis of bacterial cell wall polysaccharide components such as peptidoglycan and lipopolysaccharide. This Pseudomonas syringae pv. tomato (strain ATCC BAA-871 / DC3000) protein is Ditrans,polycis-undecaprenyl-diphosphate synthase ((2E,6E)-farnesyl-diphosphate specific).